A 250-amino-acid chain; its full sequence is Small ribosomal subunit protein uS2 (250 aa).

This sequence belongs to the universal ribosomal protein uS2 family.

This chain is Small ribosomal subunit protein uS2, found in Paraburkholderia xenovorans (strain LB400).